The chain runs to 254 residues: 3-oxo-5-alpha-steroid 4-dehydrogenase 2 (254 aa).

A run of 4 helical transmembrane segments spans residues 8–28 (SPVL…LYVA), 72–92 (PLSL…VHYF), 146–166 (FCLG…SDYI), and 206–226 (LATW…FLGL).

The protein belongs to the steroid 5-alpha reductase family.

The protein localises to the microsome membrane. The protein resides in the endoplasmic reticulum membrane. The catalysed reaction is a 3-oxo-5alpha-steroid + NADP(+) = a 3-oxo-Delta(4)-steroid + NADPH + H(+). It carries out the reaction 17beta-hydroxy-5alpha-androstan-3-one + NADP(+) = testosterone + NADPH + H(+). It catalyses the reaction 5alpha-pregnane-3,20-dione + NADP(+) = progesterone + NADPH + H(+). Converts testosterone (T) into 5-alpha-dihydrotestosterone (DHT) and progesterone or corticosterone into their corresponding 5-alpha-3-oxosteroids. It plays a central role in sexual differentiation and androgen physiology. This is 3-oxo-5-alpha-steroid 4-dehydrogenase 2 (SRD5A2) from Macaca fascicularis (Crab-eating macaque).